The following is a 683-amino-acid chain: MALLGRLLPLALALALGPAATHAGPAKSPYQLVLQHSRLRGRQHGPNVCAVQKLIGTNKKYFTNCKQWYQRKICGKSTVISYECCPGYEKVPGEKGCPAVLPLSNLYETLGVVGSTTTQLYTDRTEKLRPEMEGPGSFTIFAPSNEAWASLPAEVLDSLVSNVNIELLNALRYHMVDRRVLTDELKHGMALTSMYQNSNIQIHHYPNGIVTVNCARLLKADHHATNGVVHLIDKVISTVTNNIQQIIEIEDTFETLRAAVAASGLNTLLEGDGQYTLLAPSNEAFEKIPAETLNRILGDPEALRDLLNNHILKSAMCAEAIVAGLSLETLEGTTLEVGCSGDMLTINGKPIISNKDVLATNGVIHFIDELLIPDSAKTLFELAAESDVSTAVDLFRQAGLGSHLSGNERLTLLAPMNSVFKDGTPRIDARTKNLLLNHMIKDQLASKYLYHGQTLDTLGGKKLRVFVYRNSLCIENSCIAAHDKRGRYGTLFTMDRMLTPPMGTVMDVLKGDNRFSMLVAAIQSAGLTETLNREGVYTVFAPTNEAFQALPLGERNKLLGNAKELANILKYHVGDEILVSGGIGALVRLKSLQGDKLEVSSKNSLVTVNKEPVAEADIMATNGVVHTINTVLRPPANKPQERGDELADSALEIFKQASAFSRATQSSVKLAPVYQRLLERMKH.

The N-terminal stretch at 1–23 (MALLGRLLPLALALALGPAATHA) is a signal peptide. Residue S37 is modified to Phosphoserine. The EMI domain maps to 45–99 (GPNVCAVQKLIGTNKKYFTNCKQWYQRKICGKSTVISYECCPGYEKVPGEKGCPA). 5 cysteine pairs are disulfide-bonded: C49/C85, C74/C339, C84/C97, C214/C317, and C473/C478. C65 is modified (S-cysteinyl cysteine). FAS1 domains are found at residues 103-236 (LSNL…DKVI), 240-371 (TNNI…DELL), 375-498 (SAKT…DRML), and 502-632 (MGTV…NTVL). Residues 642–644 (RGD) carry the Cell attachment site motif.

As to quaternary structure, binds to type I, II, and IV collagens. Gamma-carboxyglutamated; gamma-carboxyglutamate residues are formed by vitamin K dependent carboxylation; these residues may be required for binding to calcium. According to a report, does not contain any vitamin K-dependent gamma-carboxyglutamate residues. In terms of processing, the EMI domain contains 2 expected intradomain disulfide bridges (Cys-49-Cys85 and Cys-84-Cys-97) and one unusual interdomain disulfide bridge to the second FAS1 domain (Cys-74-Cys-339). This arrangement violates the predicted disulfide bridge pattern of an EMI domain. As to expression, widely distributed in various tissues except for the brain. High levels in corneal epithelium.

The protein localises to the secreted. It localises to the extracellular space. It is found in the extracellular matrix. In terms of biological role, plays a role in cell adhesion. May play a role in cell-collagen interactions. The protein is Transforming growth factor-beta-induced protein ig-h3 (TGFBI) of Sus scrofa (Pig).